We begin with the raw amino-acid sequence, 280 residues long: Phosphatidylglycerol--prolipoprotein diacylglyceryl transferase (280 aa).

3 helical membrane passes run 21-41, 54-74, and 88-108; these read WYGI…ISEG, LLLW…VIFE, and IWNG…VLLI. R136 provides a ligand contact to a 1,2-diacyl-sn-glycero-3-phospho-(1'-sn-glycerol). 3 helical membrane passes run 176–196, 206–226, and 236–256; these read QPTF…ILSL, GEVF…VEGM, and IIRV…ILWI.

The protein belongs to the Lgt family.

Its subcellular location is the cell membrane. The catalysed reaction is L-cysteinyl-[prolipoprotein] + a 1,2-diacyl-sn-glycero-3-phospho-(1'-sn-glycerol) = an S-1,2-diacyl-sn-glyceryl-L-cysteinyl-[prolipoprotein] + sn-glycerol 1-phosphate + H(+). Its pathway is protein modification; lipoprotein biosynthesis (diacylglyceryl transfer). Its function is as follows. Catalyzes the transfer of the diacylglyceryl group from phosphatidylglycerol to the sulfhydryl group of the N-terminal cysteine of a prolipoprotein, the first step in the formation of mature lipoproteins. This Lactobacillus acidophilus (strain ATCC 700396 / NCK56 / N2 / NCFM) protein is Phosphatidylglycerol--prolipoprotein diacylglyceryl transferase.